Consider the following 364-residue polypeptide: Endoglucanase A (364 aa).

Glu-169 (proton donor) is an active-site residue. Catalysis depends on Glu-293, which acts as the Nucleophile.

It belongs to the glycosyl hydrolase 5 (cellulase A) family.

The protein localises to the cytoplasm. It catalyses the reaction Endohydrolysis of (1-&gt;4)-beta-D-glucosidic linkages in cellulose, lichenin and cereal beta-D-glucans.. It carries out the reaction Endohydrolysis of (1-&gt;4)-beta-D-xylosidic linkages in xylans.. Its function is as follows. Hydrolyzes both carboxymethylcellulose and xylan. Probably has a role in hydrolyzing oligosaccharides derived from cellulose, which are transported across the cell wall. This chain is Endoglucanase A (celA), found in Ruminococcus albus.